The sequence spans 165 residues: Thiol peroxidase (165 aa).

The 147-residue stretch at 18-164 (RKVGDKAPNF…YEAAIEAAKK (147 aa)) folds into the Thioredoxin domain. Cys-60 (cysteine sulfenic acid (-SOH) intermediate) is an active-site residue. A disulfide bridge links Cys-60 with Cys-94.

It belongs to the peroxiredoxin family. Tpx subfamily. In terms of assembly, homodimer.

It carries out the reaction a hydroperoxide + [thioredoxin]-dithiol = an alcohol + [thioredoxin]-disulfide + H2O. Its function is as follows. Thiol-specific peroxidase that catalyzes the reduction of hydrogen peroxide and organic hydroperoxides to water and alcohols, respectively. Plays a role in cell protection against oxidative stress by detoxifying peroxides. The sequence is that of Thiol peroxidase from Listeria innocua serovar 6a (strain ATCC BAA-680 / CLIP 11262).